A 336-amino-acid polypeptide reads, in one-letter code: tRNA-modifying protein YgfZ (336 aa).

2 residues coordinate folate: Trp28 and Trp191.

Belongs to the tRNA-modifying YgfZ family.

The protein resides in the cytoplasm. In terms of biological role, folate-binding protein involved in regulating the level of ATP-DnaA and in the modification of some tRNAs. It is probably a key factor in regulatory networks that act via tRNA modification, such as initiation of chromosomal replication. This chain is tRNA-modifying protein YgfZ, found in Hamiltonella defensa subsp. Acyrthosiphon pisum (strain 5AT).